Here is an 86-residue protein sequence, read N- to C-terminus: Putative regulatory protein Desal_2819 (86 aa).

The protein belongs to the RemA family.

In Maridesulfovibrio salexigens (strain ATCC 14822 / DSM 2638 / NCIMB 8403 / VKM B-1763) (Desulfovibrio salexigens), this protein is Putative regulatory protein Desal_2819.